The sequence spans 450 residues: Hyaluronidase-1 (450 aa).

Residues methionine 1–glutamine 35 form the signal peptide. Disulfide bonds link cysteine 58-cysteine 348 and cysteine 222-cysteine 236. Residue asparagine 85 is glycosylated (N-linked (GlcNAc...) asparagine). Glutamate 146 serves as the catalytic Proton donor. N-linked (GlcNAc...) asparagine glycosylation is found at asparagine 231 and asparagine 365. Disulfide bonds link cysteine 373-cysteine 384, cysteine 378-cysteine 433, and cysteine 435-cysteine 444. An N-linked (GlcNAc...) asparagine glycan is attached at asparagine 398. An EGF-like domain is found at cysteine 433–cysteine 444.

This sequence belongs to the glycosyl hydrolase 56 family.

Its subcellular location is the secreted. It is found in the lysosome. The enzyme catalyses Random hydrolysis of (1-&gt;4)-linkages between N-acetyl-beta-D-glucosamine and D-glucuronate residues in hyaluronate.. Functionally, may have a role in promoting tumor progression. May block the TGFB1-enhanced cell growth. The chain is Hyaluronidase-1 (HYAL1) from Bos taurus (Bovine).